Consider the following 191-residue polypeptide: MIRITEAAQEHFAKLLANQEPGTQIRVFVINPGTPNAECGVSYCPPDAVEANDRKLDFEQLSAYVDEISAPFLDDAEIDFVTDQLGSQLTLKAPNAKMRKVADDAPLIERVEYILQSQINPQLAGHGGRVSLMEITDEGYAILQFGGGCNGCSMVDYTLKEGIEKELLQRFPELKGVRDLTEHQRGDHSYY.

2 residues coordinate [4Fe-4S] cluster: Cys149 and Cys152.

This sequence belongs to the NfuA family. Homodimer. It depends on [4Fe-4S] cluster as a cofactor.

Involved in iron-sulfur cluster biogenesis. Binds a 4Fe-4S cluster, can transfer this cluster to apoproteins, and thereby intervenes in the maturation of Fe/S proteins. Could also act as a scaffold/chaperone for damaged Fe/S proteins. This is Fe/S biogenesis protein NfuA from Edwardsiella ictaluri (strain 93-146).